The chain runs to 87 residues: Large ribosomal subunit protein bL31B (87 aa).

Belongs to the bacterial ribosomal protein bL31 family. Type B subfamily. In terms of assembly, part of the 50S ribosomal subunit.

In Paraburkholderia phymatum (strain DSM 17167 / CIP 108236 / LMG 21445 / STM815) (Burkholderia phymatum), this protein is Large ribosomal subunit protein bL31B.